Consider the following 65-residue polypeptide: KKEGYLVGNDGCKYSCFTRPAQYCVHECELRKGTDGYCYAWLACYCYNMPDHVRTWSRATNRCGS.

The 63-residue stretch at 2 to 64 folds into the LCN-type CS-alpha/beta domain; it reads KEGYLVGNDG…TWSRATNRCG (63 aa). 4 disulfide bridges follow: Cys-12-Cys-63, Cys-16-Cys-38, Cys-24-Cys-44, and Cys-28-Cys-46.

Expressed by the venom gland.

The protein resides in the secreted. Functionally, beta toxins bind voltage-independently at site-4 of sodium channels (Nav) and shift the voltage of activation toward more negative potentials thereby affecting sodium channel activation and promoting spontaneous and repetitive firing. This toxin is lethal to mice. The sequence is that of Beta-mammal toxin Tpa2 from Tityus pachyurus (Colombian scorpion).